A 350-amino-acid polypeptide reads, in one-letter code: RING finger protein 44 (350 aa).

An RING-type; atypical zinc finger spans residues 298–339 (CVVCFSDFEVRQLLRVLPCNHEFHAKCVDKWLKANRTCPICR).

This chain is RING finger protein 44 (Rnf44), found in Rattus norvegicus (Rat).